Consider the following 335-residue polypeptide: UPF0284 protein TK0853 (335 aa).

The protein belongs to the UPF0284 family.

In Thermococcus kodakarensis (strain ATCC BAA-918 / JCM 12380 / KOD1) (Pyrococcus kodakaraensis (strain KOD1)), this protein is UPF0284 protein TK0853.